The sequence spans 169 residues: 6,7-dimethyl-8-ribityllumazine synthase (169 aa).

Residues Tyr30, 61 to 63 (ALE), and 90 to 92 (CVI) each bind 5-amino-6-(D-ribitylamino)uracil. 95 to 96 (ET) provides a ligand contact to (2S)-2-hydroxy-3-oxobutyl phosphate. Catalysis depends on His98, which acts as the Proton donor. Asn123 contacts 5-amino-6-(D-ribitylamino)uracil. Arg137 contributes to the (2S)-2-hydroxy-3-oxobutyl phosphate binding site.

The protein belongs to the DMRL synthase family.

The enzyme catalyses (2S)-2-hydroxy-3-oxobutyl phosphate + 5-amino-6-(D-ribitylamino)uracil = 6,7-dimethyl-8-(1-D-ribityl)lumazine + phosphate + 2 H2O + H(+). Its pathway is cofactor biosynthesis; riboflavin biosynthesis; riboflavin from 2-hydroxy-3-oxobutyl phosphate and 5-amino-6-(D-ribitylamino)uracil: step 1/2. Catalyzes the formation of 6,7-dimethyl-8-ribityllumazine by condensation of 5-amino-6-(D-ribitylamino)uracil with 3,4-dihydroxy-2-butanone 4-phosphate. This is the penultimate step in the biosynthesis of riboflavin. The chain is 6,7-dimethyl-8-ribityllumazine synthase from Methylorubrum populi (strain ATCC BAA-705 / NCIMB 13946 / BJ001) (Methylobacterium populi).